The primary structure comprises 231 residues: MAAALRSSCAAARRLLRISPAALSTLTAASSRPAAVAPLARPIAAAAVSGGNNAFSWNLRRLFSSNEKHLPAISDPEVESAFKDLMAASWTGLPDSLVIEAKKAASKATDDKAGKEALLNVFRAAEACEEFGGVLVTLRMALDDLCGITGENVGPLPGYIEDAVKSAYKRYMKYLESFGPEENYLRKKVENELGTKMIHLKMRCSGVGSEWGKITLIGTSGISGSYVELRA.

The N-terminal 63 residues, 1 to 63, are a transit peptide targeting the mitochondrion; that stretch reads MAAALRSSCA…AFSWNLRRLF (63 aa).

As to quaternary structure, component of complex II composed of eight subunits in plants: four classical SDH subunits SDH1, SDH2, SDH3 and SDH4 (a flavoprotein (FP), an iron-sulfur protein (IP), and a cytochrome b composed of a large and a small subunit.), as well as four subunits unknown in mitochondria from bacteria and heterotrophic eukaryotes.

Its subcellular location is the mitochondrion inner membrane. The protein operates within carbohydrate metabolism; tricarboxylic acid cycle. The protein is Succinate dehydrogenase subunit 5, mitochondrial of Oryza sativa subsp. japonica (Rice).